The primary structure comprises 978 residues: Calsyntenin-1 (978 aa).

The signal sequence occupies residues 1-26 (MTFHKTFGYGCIVLICFELLFAGVET). The Extracellular segment spans residues 27–876 (SSENDDEYLT…SFIHKAEGSH (850 aa)). Cadherin domains lie at 37-143 (QKEI…APTF) and 144-249 (LEPS…MPER). N-linked (GlcNAc...) asparagine glycosylation occurs at Asn-53. Residues Asn-304, Asn-486, Asn-608, and Asn-823 are each glycosylated (N-linked (GlcNAc...) asparagine). The helical transmembrane segment at 877–897 (VTMLIILVSVFLAVLLCGVSI) threads the bilayer. Residues 898–978 (ARLKNNQKYI…EWDNSNIFQQ (81 aa)) lie on the Cytoplasmic side of the membrane. The disordered stretch occupies residues 937–958 (ADVTSDASSESENSESEDEEAL). The segment covering 948–957 (ENSESEDEEA) has biased composition (acidic residues).

It belongs to the calsyntenin family.

The protein localises to the postsynaptic cell membrane. In terms of biological role, postsynaptic adhesion molecule that binds to presynaptic neurexins to mediate both excitatory and inhibitory synapse formation. Promotes synapse development by acting as a cell adhesion molecule at the postsynaptic membrane, which associates with neurexin-alpha at the presynaptic membrane. The sequence is that of Calsyntenin-1 (Cals) from Drosophila melanogaster (Fruit fly).